The sequence spans 23 residues: NLLQFNKMIKIMTKKNAIPFYSS.

It belongs to the phospholipase A2 family. Group II subfamily. The cofactor is Ca(2+). Contains 7 disulfide bonds. As to expression, expressed by the venom gland.

Its subcellular location is the secreted. It carries out the reaction a 1,2-diacyl-sn-glycero-3-phosphocholine + H2O = a 1-acyl-sn-glycero-3-phosphocholine + a fatty acid + H(+). Functionally, snake venom phospholipase A2 (PLA2) that displays presynaptic neurotoxicity. PLA2 catalyzes the calcium-dependent hydrolysis of the 2-acyl groups in 3-sn-phosphoglycerides. This chain is Basic phospholipase A2 mangshantoxin, found in Protobothrops mangshanensis (Mangshan pitviper).